A 494-amino-acid polypeptide reads, in one-letter code: Glutamate decarboxylase 5 (494 aa).

An N6-(pyridoxal phosphate)lysine modification is found at K276.

It belongs to the group II decarboxylase family. Homohexamer. Interacts with calmodulin. Pyridoxal 5'-phosphate serves as cofactor. In terms of tissue distribution, expressed in flowers.

It catalyses the reaction L-glutamate + H(+) = 4-aminobutanoate + CO2. In terms of biological role, catalyzes the production of GABA. The calmodulin-binding is calcium-dependent and it is proposed that this may, directly or indirectly, form a calcium regulated control of GABA biosynthesis. In Arabidopsis thaliana (Mouse-ear cress), this protein is Glutamate decarboxylase 5 (GAD5).